The following is an 80-amino-acid chain: Exodeoxyribonuclease 7 small subunit (80 aa).

Belongs to the XseB family. In terms of assembly, heterooligomer composed of large and small subunits.

The protein resides in the cytoplasm. The enzyme catalyses Exonucleolytic cleavage in either 5'- to 3'- or 3'- to 5'-direction to yield nucleoside 5'-phosphates.. Functionally, bidirectionally degrades single-stranded DNA into large acid-insoluble oligonucleotides, which are then degraded further into small acid-soluble oligonucleotides. This is Exodeoxyribonuclease 7 small subunit from Shigella sonnei (strain Ss046).